Reading from the N-terminus, the 439-residue chain is Xaa-Pro dipeptidase (439 aa).

Mn(2+) is bound by residues D244, D255, H335, E380, and E419.

It belongs to the peptidase M24B family. Bacterial-type prolidase subfamily. Mn(2+) is required as a cofactor.

It catalyses the reaction Xaa-L-Pro dipeptide + H2O = an L-alpha-amino acid + L-proline. Its function is as follows. Splits dipeptides with a prolyl residue in the C-terminal position. This Shewanella sp. (strain MR-7) protein is Xaa-Pro dipeptidase.